The chain runs to 199 residues: Inosine triphosphate pyrophosphatase (199 aa).

12 to 17 serves as a coordination point for ITP; the sequence is TGNAKK. Glu42 lines the Mg(2+) pocket. ITP contacts are provided by residues Lys54, 70 to 71, Lys87, 146 to 149, Lys169, and 174 to 175; these read DT, FGWD, and HR.

This sequence belongs to the HAM1 NTPase family. Homodimer. Mg(2+) is required as a cofactor. The cofactor is Mn(2+).

Its subcellular location is the cytoplasm. The catalysed reaction is ITP + H2O = IMP + diphosphate + H(+). It carries out the reaction dITP + H2O = dIMP + diphosphate + H(+). It catalyses the reaction XTP + H2O = XMP + diphosphate + H(+). Pyrophosphatase that hydrolyzes non-canonical purine nucleotides such as inosine triphosphate (ITP), deoxyinosine triphosphate (dITP) or xanthosine 5'-triphosphate (XTP) to their respective monophosphate derivatives. The enzyme does not distinguish between the deoxy- and ribose forms. Probably excludes non-canonical purines from RNA and DNA precursor pools, thus preventing their incorporation into RNA and DNA and avoiding chromosomal lesions. This is Inosine triphosphate pyrophosphatase from Monosiga brevicollis (Choanoflagellate).